An 885-amino-acid polypeptide reads, in one-letter code: Disease resistance protein RFL1 (885 aa).

Residues 27–61 (SYIQNLSENLASLQKAMGVLNAKRDDVQGRINREE) adopt a coiled-coil conformation. The region spanning 141–443 (EAAPIAEVEE…CEGFIKEKQG (303 aa)) is the NB-ARC domain. 183-190 (GMGGVGKT) serves as a coordination point for ATP. LRR repeat units follow at residues 517–538 (AVKR…PECV), 539–561 (ELIT…FFRC), 564–586 (SLAV…ISEL), 588–610 (SLQY…HELR), 611–633 (KLVH…SYLS), 634–655 (SLRT…MKEL), and 657–679 (LLEH…LFCY).

This sequence belongs to the disease resistance NB-LRR family.

Its function is as follows. Disease resistance (R) protein. The polypeptide is Disease resistance protein RFL1 (RFL1) (Arabidopsis thaliana (Mouse-ear cress)).